The chain runs to 181 residues: ATP-dependent protease subunit HslV (181 aa).

Threonine 11 is an active-site residue. Residues alanine 166, cysteine 169, and threonine 172 each coordinate Na(+).

This sequence belongs to the peptidase T1B family. HslV subfamily. In terms of assembly, a double ring-shaped homohexamer of HslV is capped on each side by a ring-shaped HslU homohexamer. The assembly of the HslU/HslV complex is dependent on binding of ATP.

The protein resides in the cytoplasm. The catalysed reaction is ATP-dependent cleavage of peptide bonds with broad specificity.. With respect to regulation, allosterically activated by HslU binding. Protease subunit of a proteasome-like degradation complex believed to be a general protein degrading machinery. The chain is ATP-dependent protease subunit HslV from Chlorobaculum parvum (strain DSM 263 / NCIMB 8327) (Chlorobium vibrioforme subsp. thiosulfatophilum).